We begin with the raw amino-acid sequence, 866 residues long: Protein aubergine (866 aa).

Residue M1 is modified to N-acetylmethionine. The interval 1–61 (MNLPPNPVIA…GGGDAQVGPS (61 aa)) is disordered. R11, R13, R15, and R17 each carry symmetric dimethylarginine. Over residues 46 to 56 (ASGGNGGGGDA) the composition is skewed to gly residues. The 110-residue stretch at 281–390 (TLYNILSDAI…IIPELARATG (110 aa)) folds into the PAZ domain. Residues 555-852 (IVMVVMRSPN…LAFLVAESIN (298 aa)) form the Piwi domain.

It belongs to the argonaute family. Piwi subfamily. In terms of assembly, component of the ping-pong piRNA processing (4P) complex consisting of krimp, aub and AGO3. Interacts (via N-terminus when symmetrically dimethylated on arginine residues) with krimp (via tudor domain); this interaction requires methylation of at least one N-terminal arginie residue. Interacts with vas and AGO3. May form part of a piRNA processing complex consisting of tud, aub and AGO3. Interacts (when symmetrically dimethylated on arginine residues) with tud; methylation and/or interaction requires association with piRNA. Interacts (via N-terminus and when associated with piRNA) with csul/PRMT5; the interaction recruits the PRMT5 methylosome complex to modify N-terminal arginines by symmetrical dimethylation but involves residues other than the arginines to be modified. Forms a complex with smg, twin, AGO3, nanos mRNA and piRNAs that targets the nanos 3'-untranslated region, in early embryos. Interacts with nanos mRNA and rump (in an RNA-dependent manner). Interacts with papi and vret. Interacts with me31B. In terms of processing, symmetrical dimethylation of arginines (sDMA) on Arg-11, Arg-13 and/or Arg-15 by csul/PRMT5/DART5, is required for binding to tud, localization to the pole plasm and association with the correct piRNAs. SDMA on Arg-11, Arg-13, Arg-15 and/or Arg-17 is required for binding to krimp and stable recruitment to subregions of the nuage. Methylation state does not affect protein stability. SDMA plays an important role in ping-pong amplification of piRNAs and is essential for function in vivo. Methylation state functions as an indicator of its piRNA binding state. PiRNA binding promotes sDMA modification; piRNA binding induces a conformational change that exposes the N-terminal arginines, making them available to the methylosome complex. As to expression, expressed in ovary. In the germarium, found in germline stem and cyst cells. In egg chambers from stage 6, expressed both in nurse cells and oocytes. In embryos, accumulates in the pole cells, although low expression is detected throughout the entire embryo. In testis, expressed in germline stem cells, gonialblast and spermatogonia cells (at protein level). In the adult brain, expressed in the ellipsoid body, the mushroom body subdivision in the peduncle and the cell body layer. Expressed specifically in alpha'/beta' and gamma neurons.

It localises to the cytoplasm. Its subcellular location is the cytosol. The protein localises to the perinuclear region. The protein resides in the cytoplasmic ribonucleoprotein granule. In terms of biological role, component of the perinuclear meiotic nuage, a germline-specific subcellular membraneless ribonucleoprotein compartment involved in production of transposable element-repressing Piwi-interacting RNA (piRNA)-induced silencing complexes (piRISCs), which are essential for maintaining germline integrity during oogenesis; essential for the formation and/or structural integrity of nuage particles. Acts via the Piwi-interacting RNA (piRNA) metabolic process, which mediates the repression of transposable elements during meiosis by forming complexes composed of piRNAs and Piwi proteins and governs the methylation and subsequent repression of transposons. Directly binds piRNAs, a class of 24 to 30 nucleotide RNAs that are generated by a Dicer-independent mechanism and are primarily derived from transposons and other repeated sequence elements. Shows RNA cleavage or slicer activity; including aub-piRNA complexes from ovary and testis. When loaded with guide piRNAs recognizes and cleaves complementary RNAs to repress their expression and produce complementary piRNAs. Together with Piwi protein AGO3 recruited to subregions of the perinuclear nuage by krimp, which coordinates their activity in the ping-pong amplification step of secondary piRNA biogenesis. Krimp recruits piRNA bound aub and unbound AGO3, bringing them into close proximity to facilitate the loading onto AGO3 of freshly cut piRNAs generated by aub cleavage of target sequences; krimp recognizes the piRNA loading state of the Piwi proteins via symmetrically dimethylated arginine modification in their N-terminus. Important for asymmetric ping-pong amplification to bias production towards antisense piRNAs capable of silencing transposable elements. Required for the localization of mael and krimp to the meiotic nuage. In ovary, associates predominantly with antisense piRNAs that contain uridine at their 5' end. In testis, associates with Su(Ste) antisense piRNAs (most abundant class of piRNAs found in complex with aub in testes) and negatively regulates Ste expression, most likely by cleaving its transcripts. Also in testis, may repress translation of vas when associated with a piRNA derived from chromosome X, termed AT-chX-1, whose sequence shows strong complementarity to vas mRNA. Involved in repression of long interspersed nuclear elements (LINEs) including HeT-A, I-element and TART LINEs. Repression of specialized telomeric retroelements HeT-A and TART is involved in telomere regulation; Drosophila telomeres being maintained by transposition of specialized telomeric retroelements. Also involved in telomeric trans-silencing, a repression mechanism by which a transposon or a transgene inserted in subtelomeric heterochromatin has the capacity to repress in trans, in the female germline, a homologous transposon, or transgene located in euchromatin. Involved in the suppression of meiotic drive of sex chromosomes and autosomes. Involved in transposon silencing in the adult brain. Required for dorsal-ventral as well as anterior-posterior patterning of the egg. Required during oogenesis for primordial germ cell formation and activation of RNA interference. During early oogenesis, required for osk mRNA silencing and polarization of the microtubule cytoskeleton. During mid-oogenesis, required for osk mRNA localization to the posterior pole and efficient translation of osk and grk. During embryogenesis, required for posterior localization of nanos (nos) mRNA, independently of osk, and pole cell formation. Forms a complex with smg, twin, AGO3 and specific piRNAs that targets nanos mRNA (and probably other maternal mRNAS) for deadenylation promoting its decay during early embryogenesis. This Drosophila melanogaster (Fruit fly) protein is Protein aubergine.